A 75-amino-acid polypeptide reads, in one-letter code: Large ribosomal subunit protein bL31 (75 aa).

Belongs to the bacterial ribosomal protein bL31 family. Type A subfamily. In terms of assembly, part of the 50S ribosomal subunit.

Functionally, binds the 23S rRNA. In Nitrobacter winogradskyi (strain ATCC 25391 / DSM 10237 / CIP 104748 / NCIMB 11846 / Nb-255), this protein is Large ribosomal subunit protein bL31.